An 809-amino-acid polypeptide reads, in one-letter code: MASSLSSKAKTFKSPTKTPTKMYRKSYLSPSSTSLTPPQTPETLTPLRRSSRHVSRKINLGNDPIDLPGKESVEEINLIRKPRKRTNDIVVAEKSKKKKIDPEVSFSPVSPIRSETKKTKKKKRVYYNKVEFDETEFEIGDDVYVKRTEDANPDEEEEEDPEIEDCQICFKSHTNTIMIECDDCLGGFHLNCLKPPLKEVPEGDWICQFCEVKKSGQTLVVVPKPPEGKKLARTMKEKLLSSDLWAARIEKLWKEVDDGVYWIRARWYMIPEETVLGRQRHNLKRELYLTNDFADIEMECVLRHCFVKCPKEFSKASNDGDDVFLCEYEYDVHWGSFKRVAELADGDEDSDQEWNGRKEEEIDYSDEEIEFDDEESVRGVSKSKRGGANSRKGRFFGLEKVGMKRIPEHVRCHKQSELEKAKATLLLATRPKSLPCRSKEMEEITAFIKGSISDDQCLGRCMYIHGVPGTGKTISVLSVMKNLKAEVEAGSVSPYCFVEINGLKLASPENIYSVIYEGLSGHRVGWKKALQSLNERFAEGKKIGKENEKPCILLIDELDVLVTRNQSVLYNILDWPTKPNSKLVVLGIANTMDLPEKLLPRISSRMGIQRLCFGPYNHRQLQEIISTRLEGINAFEKTAIEFASRKVAAISGDARRALEICRRAAEVADYRLKKSNISAKSQLVIMADVEVAIQEMFQAPHIQVMKSVSKLSRIFLTAMVHELYKTGMAETSFDRVATTVSSICLTNGEAFPGWDILLKIGCDLGECRIVLCEPGEKHRLQKLQLNFPSDDVAFALKDNKDLPWLANYL.

The segment covering 1–47 has biased composition (low complexity); that stretch reads MASSLSSKAKTFKSPTKTPTKMYRKSYLSPSSTSLTPPQTPETLTPL. Residues 1 to 69 are disordered; sequence MASSLSSKAK…LGNDPIDLPG (69 aa). A histone H3 binding region spans residues 160–185; it reads DPEIEDCQICFKSHTNTIMIECDDCL. A PHD-type zinc finger spans residues 163-213; it reads IEDCQICFKSHTNTIMIECDDCLGGFHLNCLKPPLKEVPEGDWICQFCEVK. Cys166, Cys169, Cys181, Cys184, His189, and Cys192 together coordinate Zn(2+). The interval 201–205 is histone H3 binding; sequence PEGDW. Cys207 and Cys210 together coordinate Zn(2+). Positions 223–341 constitute a BAH domain; that stretch reads PKPPEGKKLA…VHWGSFKRVA (119 aa). Residues 316–321 form a histone H3 binding region; the sequence is ASNDGD. The tract at residues 431 to 799 is necessary and sufficient for ORC complex assembly; the sequence is PKSLPCRSKE…DDVAFALKDN (369 aa). ATP contacts are provided by residues 466–473 and 466–474; these read GVPGTGKT and GVPGTGKTI. Mg(2+) is bound by residues Asp556 and Glu557. ATP contacts are provided by Glu557, Asn590, and Arg655.

This sequence belongs to the ORC1 family. In terms of assembly, component of the origin recognition complex (ORC) composed of at least ORC1 (ORC1A or ORC1B), ORC2, ORC3, ORC4, ORC5 and ORC6. ORC is regulated in a cell-cycle and development dependent manner. It is sequentially assembled at the exit from anaphase of mitosis and disassembled as cells enter S phase. Interacts directly with ORC2, ORC3, ORC4 and ORC5. Binds mostly unmodified histone H3, and, with lower efficiency, H3K4me1 H3K4me2 and H3K4me3. Follow a cell-cycle regulation with a peak at the G1/S-phase. Mostly expressed in siliques, flowers and flower buds, and, to a lower extent, in roots, leaves and stems.

Its subcellular location is the nucleus. In terms of biological role, essential protein. Component of the origin recognition complex (ORC) that binds origins of replication. It has a role in both chromosomal replication and mating type transcriptional silencing. Binds to the ARS consensus sequence (ACS) of origins of replication. H3K4me3 effector that positively regulates the transcription of a subset of genes. The protein is Origin of replication complex subunit 1A of Arabidopsis thaliana (Mouse-ear cress).